Reading from the N-terminus, the 303-residue chain is Oxygen-dependent coproporphyrinogen-III oxidase (303 aa).

Ser93 contributes to the substrate binding site. A divalent metal cation-binding residues include His97 and His107. Catalysis depends on His107, which acts as the Proton donor. Substrate is bound at residue 109-111; the sequence is NVR. Residues His146 and His176 each coordinate a divalent metal cation. The segment at 241-276 is important for dimerization; the sequence is YVEFNLVYDRGTLFGLQSGGRTESILMSLPPQVRWG. Substrate is bound at residue 259–261; sequence GGR.

Belongs to the aerobic coproporphyrinogen-III oxidase family. In terms of assembly, homodimer. A divalent metal cation is required as a cofactor.

Its subcellular location is the cytoplasm. The catalysed reaction is coproporphyrinogen III + O2 + 2 H(+) = protoporphyrinogen IX + 2 CO2 + 2 H2O. Its pathway is porphyrin-containing compound metabolism; protoporphyrin-IX biosynthesis; protoporphyrinogen-IX from coproporphyrinogen-III (O2 route): step 1/1. Functionally, involved in the heme biosynthesis. Catalyzes the aerobic oxidative decarboxylation of propionate groups of rings A and B of coproporphyrinogen-III to yield the vinyl groups in protoporphyrinogen-IX. This chain is Oxygen-dependent coproporphyrinogen-III oxidase, found in Pseudomonas putida (strain GB-1).